The primary structure comprises 291 residues: ATP synthase gamma chain (291 aa).

Belongs to the ATPase gamma chain family. In terms of assembly, F-type ATPases have 2 components, CF(1) - the catalytic core - and CF(0) - the membrane proton channel. CF(1) has five subunits: alpha(3), beta(3), gamma(1), delta(1), epsilon(1). CF(0) has three main subunits: a, b and c.

It is found in the cell membrane. Its function is as follows. Produces ATP from ADP in the presence of a proton gradient across the membrane. The gamma chain is believed to be important in regulating ATPase activity and the flow of protons through the CF(0) complex. This is ATP synthase gamma chain from Lachnoclostridium phytofermentans (strain ATCC 700394 / DSM 18823 / ISDg) (Clostridium phytofermentans).